A 1322-amino-acid chain; its full sequence is C-Jun-amino-terminal kinase-interacting protein 3 (1322 aa).

Positions 12–100 (VVVYQDDYCS…LTQYEREKAL (89 aa)) constitute an RH1 domain. The segment at 50–80 (EVVKELMPLVVNVLENLDSVLSENQEHEVEL) is kinesin-binding domain (KBD); essential for its function in axon elongation. Positions 66–167 (LDSVLSENQE…KKEYNALHQR (102 aa)) form a coiled coil. Disordered stretches follow at residues 183–211 (KMQQVGGGGQTESSLPGRSRKERPTSLNV) and 245–317 (SSSY…NSRN). The tract at residues 210 to 226 (NVFPLADGMVRAQMGGK) is JNK-binding domain (JBD); essential for its function in axon elongation. Residues 261–270 (SSAAATPSTT) show a composition bias toward low complexity. Phosphothreonine occurs at positions 266, 276, and 287. Positions 271–282 (GTKSNTPTSSVP) are enriched in polar residues. The segment covering 305–315 (NNKRAREKRNS) has biased composition (basic residues). A phosphoserine mark is found at S315, S365, and S366. Positions 424–459 (QLLETKNALNVVKNDLIAKVDQLSGEQEVLKGELEA) are leucine zipper-like domain (LZ); essential for its function in axon elongation. Residues 443 to 534 (VDQLSGEQEV…KERLMELQEA (92 aa)) are a coiled coil. The tract at residues 459–515 (AAKQAKVKLENRIKELEEELKRVKSEAVTARREPREEVEDDKIPMAQRRRFTRVEMA) is interaction with NTRK2. One can recognise an RH2 domain in the interval 506 to 580 (RRRFTRVEMA…SPPPAKRSYP (75 aa)). 2 positions are modified to phosphoserine: S588 and S662. 3 disordered regions span residues 704-754 (WKPN…EADA), 844-952 (PRSN…TTSS), and 1281-1307 (RIGDGEDDETEEGTGDVNQTKPSLSKA). Over residues 724–750 (LTCDREGEGEPKSTHPSPEKKKAKEVP) the composition is skewed to basic and acidic residues. Residues 914–937 (APTQSSSTQPASENGSESDGSIVQ) are compositionally biased toward polar residues. Over residues 941-952 (EPSGESSATTSS) the composition is skewed to low complexity. A compositionally biased stretch (acidic residues) spans 1285–1294 (GEDDETEEGT).

It belongs to the JIP scaffold family. As to quaternary structure, forms homo- or heterooligomeric complexes. The central region of MAPK8IP3 interacts with the C-terminal of MAPK8IP2 but not MAPK8IP1. Binds specific components of the JNK signaling pathway namely MAPK8/JNK1, MAPK9/JNK2 and MAPK10/JNK3 to the N-terminal region, MAP2K4/MKK4 and MAP2K7/MKK7 to the central region and MAP3K11 to the C-terminal region. Binds the TPR motif-containing C-terminal of kinesin light chain, KLC1. Pre-assembled MAPK8IP1 scaffolding complexes are then transported as a cargo of kinesin, to the required subcellular location. Interacts with ROCK1 and this interaction is enhanced by ultraviolet-B (UVB) radiation. Interacts with SH3RF2. Interacts with NTRK3/TRKC. Interacts with NTRK2/TRKB. Phosphorylation by ROCK1 is crucial for the recruitment of JNK.

It is found in the cytoplasm. Its subcellular location is the golgi apparatus. It localises to the cytoplasmic vesicle. The protein localises to the cell projection. The protein resides in the growth cone. It is found in the axon. Its subcellular location is the dendrite. It localises to the perinuclear region. Functionally, the JNK-interacting protein (JIP) group of scaffold proteins selectively mediates JNK signaling by aggregating specific components of the MAPK cascade to form a functional JNK signaling module. May function as a regulator of vesicle transport, through interactions with the JNK-signaling components and motor proteins. Promotes neuronal axon elongation in a kinesin- and JNK-dependent manner. Activates cofilin at axon tips via local activation of JNK, thereby regulating filopodial dynamics and enhancing axon elongation. Its binding to kinesin heavy chains (KHC), promotes kinesin-1 motility along microtubules and is essential for axon elongation and regeneration. Regulates cortical neuronal migration by mediating NTRK2/TRKB anterograde axonal transport during brain development. Acts as an adapter that bridges the interaction between NTRK2/TRKB and KLC1 and drives NTRK2/TRKB axonal but not dendritic anterograde transport, which is essential for subsequent BDNF-triggered signaling and filopodia formation. The protein is C-Jun-amino-terminal kinase-interacting protein 3 (Mapk8ip3) of Rattus norvegicus (Rat).